We begin with the raw amino-acid sequence, 260 residues long: MNNIHKTAIIEEGAILGDNITIGAFTIIGKNVKIGDGTIIDSHTLIDGKTTIGKNNHIFSHASIGTIPQDLKFNGEDVELIIGDNNKIREYTLFNPGTIGGGSVTKIGSNNLFMGYVHVAHDCIIGDNCIFANGATLAGHVECDDFVVVGGLTPIHQFCKIGTQVMIGGASAVAQDIPPFCLAEGNKAVLRGLNLTGLRRRFDNREDIDAIKHAYRELFEVGKPLQDVARELLDNDKNKYVKELASFVLNTKRGIPFNRK.

Belongs to the transferase hexapeptide repeat family. LpxA subfamily. As to quaternary structure, homotrimer.

Its subcellular location is the cytoplasm. The enzyme catalyses a (3R)-hydroxyacyl-[ACP] + UDP-N-acetyl-alpha-D-glucosamine = a UDP-3-O-[(3R)-3-hydroxyacyl]-N-acetyl-alpha-D-glucosamine + holo-[ACP]. Its pathway is glycolipid biosynthesis; lipid IV(A) biosynthesis; lipid IV(A) from (3R)-3-hydroxytetradecanoyl-[acyl-carrier-protein] and UDP-N-acetyl-alpha-D-glucosamine: step 1/6. Involved in the biosynthesis of lipid A, a phosphorylated glycolipid that anchors the lipopolysaccharide to the outer membrane of the cell. The sequence is that of Acyl-[acyl-carrier-protein]--UDP-N-acetylglucosamine O-acyltransferase from Aliarcobacter butzleri (strain RM4018) (Arcobacter butzleri).